Reading from the N-terminus, the 834-residue chain is Structure-specific endonuclease subunit SLX4 (834 aa).

6 disordered regions span residues 80-105 (RVPRNNPVTGPSKEHKQRTRSPKTTT), 272-307 (TVPAIPTPTESSTTEDVQGSSSKQQRVKAKKPQKGK), 332-372 (QNVA…GRPV), 401-421 (GYPEYPCDETQDTQNSPSNSA), 603-649 (ESKP…AKAL), and 720-740 (ATPNARRSRQGSSSASFSIEP). Residues 279–295 (PTESSTTEDVQGSSSKQ) show a composition bias toward polar residues. Over residues 296 to 305 (QRVKAKKPQK) the composition is skewed to basic residues. 2 stretches are compositionally biased toward polar residues: residues 345-366 (SNRPSGTKHSNSGRGKSSTLKN) and 412-421 (DTQNSPSNSA). Residues 611–630 (DDARKNGFRKENHSDVRVRP) are compositionally biased toward basic and acidic residues. Residues 729–740 (QGSSSASFSIEP) are compositionally biased toward low complexity.

The protein belongs to the SLX4 family. As to quaternary structure, forms a heterodimer with SLX1. Phosphorylated in response to DNA damage.

It localises to the nucleus. In terms of biological role, regulatory subunit of the SLX1-SLX4 structure-specific endonuclease that resolves DNA secondary structures generated during DNA repair and recombination. Has endonuclease activity towards branched DNA substrates, introducing single-strand cuts in duplex DNA close to junctions with ss-DNA. This is Structure-specific endonuclease subunit SLX4 from Ajellomyces capsulatus (strain NAm1 / WU24) (Darling's disease fungus).